The sequence spans 31 residues: Potassium channel toxin alpha-KTx 5.1 (31 aa).

Intrachain disulfides connect Cys3–Cys21, Cys8–Cys26, and Cys12–Cys28. A [R/K]XCQ motif region spans residues 6–9 (RMCQ). The residue at position 31 (His31) is a Histidine amide.

It belongs to the short scorpion toxin superfamily. Potassium channel inhibitor family. Alpha-KTx 05 subfamily. Post-translationally, two disulfide bonds are the minimal requirement needed to produce a nativelike and bio-active conformation in this toxin. The third disulfide provides an additional contribution to structure stabilization and can modulate biological potency depending on its position and the structural regions involved in biological activity. As to expression, expressed by the venom gland.

It is found in the secreted. Its function is as follows. Blocker for the small conductance calcium-activated potassium channels. Shows the best affinity for KCa2.2/KCNN2 (Kd=0.2 nM), followed by KCa2.3/KCNN3 (Kd=1.1 nM) and KCa2.1/KCNN1 (Kd=325 nM). This Leiurus hebraeus (Hebrew deathstalker scorpion) protein is Potassium channel toxin alpha-KTx 5.1.